Consider the following 217-residue polypeptide: Octanoyltransferase (217 aa).

The BPL/LPL catalytic domain maps to 32 to 207; sequence SDSPDELWIV…TLSQLLGYQQ (176 aa). Substrate contacts are provided by residues 71-78, 138-140, and 151-153; these read RGGQVTYH, SLG, and GLA. The active-site Acyl-thioester intermediate is the Cys169.

It belongs to the LipB family.

Its subcellular location is the cytoplasm. The enzyme catalyses octanoyl-[ACP] + L-lysyl-[protein] = N(6)-octanoyl-L-lysyl-[protein] + holo-[ACP] + H(+). The protein operates within protein modification; protein lipoylation via endogenous pathway; protein N(6)-(lipoyl)lysine from octanoyl-[acyl-carrier-protein]: step 1/2. Functionally, catalyzes the transfer of endogenously produced octanoic acid from octanoyl-acyl-carrier-protein onto the lipoyl domains of lipoate-dependent enzymes. Lipoyl-ACP can also act as a substrate although octanoyl-ACP is likely to be the physiological substrate. In Shewanella sp. (strain ANA-3), this protein is Octanoyltransferase.